A 455-amino-acid chain; its full sequence is Nuclear receptor subfamily 6 group A member 1-B (455 aa).

Positions 38–113 (ERWCLICGDR…MGMNRKAIRE (76 aa)) form a DNA-binding region, nuclear receptor. 2 NR C4-type zinc fingers span residues 41 to 61 (CLICGDRASGLHYGIISCEGC) and 77 to 96 (CNRDKNCQMSRKQRNRCQYC). The disordered stretch occupies residues 145-173 (EGSDLSDSWSHGYSNHSSPGNSLSEGGQS). Residues 149–165 (LSDSWSHGYSNHSSPGN) show a composition bias toward polar residues. Positions 215-446 (QTHTLTGQIL…YSCTTNQNPW (232 aa)) constitute an NR LBD domain.

It belongs to the nuclear hormone receptor family. NR6 subfamily. Homodimer.

The protein localises to the nucleus. Probable orphan nuclear receptor. Binds to a response element containing repeats of the motif 5'-AGGTCA-3'. This Danio rerio (Zebrafish) protein is Nuclear receptor subfamily 6 group A member 1-B.